A 646-amino-acid polypeptide reads, in one-letter code: Acetyl-coenzyme A synthetase (646 aa).

CoA contacts are provided by residues 189–192 (RGPK), Thr307, and Asn331. Residues 383–385 (GEP), 407–412 (DTWWQT), Asp496, and Arg511 contribute to the ATP site. Ser519 contacts CoA. Arg522 lines the ATP pocket. Val533, His535, and Val538 together coordinate Mg(2+). Arg580 lines the CoA pocket. Lys605 carries the N6-acetyllysine modification.

Belongs to the ATP-dependent AMP-binding enzyme family. Requires Mg(2+) as cofactor. Post-translationally, acetylated. Deacetylation by the SIR2-homolog deacetylase activates the enzyme.

The catalysed reaction is acetate + ATP + CoA = acetyl-CoA + AMP + diphosphate. Functionally, catalyzes the conversion of acetate into acetyl-CoA (AcCoA), an essential intermediate at the junction of anabolic and catabolic pathways. AcsA undergoes a two-step reaction. In the first half reaction, AcsA combines acetate with ATP to form acetyl-adenylate (AcAMP) intermediate. In the second half reaction, it can then transfer the acetyl group from AcAMP to the sulfhydryl group of CoA, forming the product AcCoA. This Desulfatibacillum aliphaticivorans protein is Acetyl-coenzyme A synthetase.